The following is a 309-amino-acid chain: Mitochondrial succinate-fumarate transporter 1 (309 aa).

Solcar repeat units follow at residues 11 to 96 (IPPY…FQTA), 108 to 196 (RGRF…FDIL), and 208 to 298 (LQPW…VTGL). Helical transmembrane passes span 17-37 (AVSG…IDVI), 65-85 (VRAL…KYTL), 111-131 (FLSG…PFEV), 171-191 (GAAP…TAKN), 214-234 (MISG…FDVV), and 273-293 (GLLP…AVAD).

The protein belongs to the mitochondrial carrier (TC 2.A.29) family. Expressed in root tips, cotyledons, hypocotyls, leaves, trichomes, stems, flowers, carpels, anthers, pollen and abscission zone of siliques.

It is found in the mitochondrion inner membrane. In terms of biological role, may transport cytoplasmic succinate, derived from fatty acid oxidation, into the mitochondrial matrix in exchange of fumarate during lipid mobilization in seed germination. Conversion of seed-reserved triacylglycerols into sucrose is necessary for growth before the onset of photosynthesis and involves fatty acid beta-oxidation, the glyoxylate cycle and gluconeogenesis. The sequence is that of Mitochondrial succinate-fumarate transporter 1 (SFC1) from Arabidopsis thaliana (Mouse-ear cress).